The primary structure comprises 129 residues: Large ribosomal subunit protein bL17 (129 aa).

Belongs to the bacterial ribosomal protein bL17 family. As to quaternary structure, part of the 50S ribosomal subunit. Contacts protein L32.

The chain is Large ribosomal subunit protein bL17 from Buchnera aphidicola subsp. Baizongia pistaciae (strain Bp).